The following is a 211-amino-acid chain: Thymidylate kinase (211 aa).

10–17 (GVEGCGKT) lines the ATP pocket.

The protein belongs to the thymidylate kinase family.

The enzyme catalyses dTMP + ATP = dTDP + ADP. Functionally, phosphorylation of dTMP to form dTDP in both de novo and salvage pathways of dTTP synthesis. The protein is Thymidylate kinase of Nostoc sp. (strain PCC 7120 / SAG 25.82 / UTEX 2576).